We begin with the raw amino-acid sequence, 417 residues long: Phosphoglycerate kinase 1 (417 aa).

Serine 2 carries the post-translational modification N-acetylserine. Phosphoserine occurs at positions 2 and 4. Lysine 6 carries the N6-succinyllysine modification. Position 11 is an N6-acetyllysine (lysine 11). (2R)-3-phosphoglycerate contacts are provided by valine 23, aspartate 24, phenylalanine 25, asparagine 26, glutamine 38, and arginine 39. The mitochondrial targeting region exposed following cis-trans isomerization by PIN1 and recognized by the TOM complex for mitochondrial translocation of the protein stretch occupies residues 38–43; that stretch reads QRIKAA. Lysine 48 is modified (N6-acetyllysine; alternate). Lysine 48 carries the N6-succinyllysine; alternate modification. 4 residues coordinate (2R)-3-phosphoglycerate: serine 62, histidine 63, glycine 65, and arginine 66. N6-acetyllysine is present on lysine 75. Tyrosine 76 is modified (phosphotyrosine). Residues lysine 86 and lysine 91 each carry the N6-acetyllysine modification. N6-acetyllysine; alternate is present on lysine 97. Lysine 97 carries the N6-(2-hydroxyisobutyryl)lysine; alternate modification. Positions 122 and 123 each coordinate (2R)-3-phosphoglycerate. Lysine 131 is modified (N6-acetyllysine; alternate). Lysine 131 bears the N6-malonyllysine; alternate mark. Position 146 is an N6-acetyllysine (lysine 146). The (2R)-3-phosphoglycerate site is built by histidine 170 and arginine 171. N6-succinyllysine is present on lysine 191. Position 196 is a phosphotyrosine (tyrosine 196). Lysine 199 bears the N6-acetyllysine mark. A Phosphoserine modification is found at serine 203. An ADP-binding site is contributed by glycine 214. Glycine 214 contacts CDP. Residues alanine 215 and lysine 216 each contribute to the AMP site. Alanine 215 serves as a coordination point for ATP. Position 215 (alanine 215) interacts with Mg(2+). Position 216 is an N6-(2-hydroxyisobutyryl)lysine (lysine 216). Mg(2+)-binding residues include alanine 218 and aspartate 219. Aspartate 219 lines the CDP pocket. Lysine 220 contributes to the AMP binding site. Lysine 220 contacts ATP. N6-(2-hydroxyisobutyryl)lysine is present on lysine 220. Glycine 238 contacts ADP. Glycine 238 serves as a coordination point for CDP. Glycine 239 is a binding site for AMP. Position 239 (glycine 239) interacts with ATP. An N6-acetyllysine mark is found at lysine 267 and lysine 291. Glycine 313 lines the AMP pocket. An ATP-binding site is contributed by glycine 313. Lysine 323 is subject to N6-(2-hydroxyisobutyryl)lysine. Residues glycine 338, valine 340, and phenylalanine 343 each contribute to the CDP site. Phenylalanine 343 contributes to the ADP binding site. Residue glutamate 344 coordinates AMP. An ATP-binding site is contributed by glutamate 344. Serine 354 is subject to Phosphoserine. Lysine 361 bears the N6-acetyllysine mark. ATP contacts are provided by aspartate 375 and threonine 376. Position 375 (aspartate 375) interacts with Mg(2+).

It belongs to the phosphoglycerate kinase family. Monomer. Interacts with kinase MAPK1/ERK2; the interaction is direct, occurs under hypoxic conditions, and promotes its interaction with PIN1. Interacts with peptidyl-prolyl cis-trans isomerase PIN1; the interaction is direct, occurs under hypoxic conditions, and targets the protein to the mitochondrion by promoting interactions with the TOM complex. Interacts with mitochondrial circRNA mcPGK1 (via its 2nd stem-loop); the interaction is direct and targets the protein to the mitochondrion by promoting interactions with the TOM complex. Interacts with pyruvate dehydrogenase kinase PDK1; the interaction is direct, occurs under hypoxic conditions and leads to PDK1-mediated inhibition of pyruvate dehydrogenase complex activity. Mg(2+) serves as cofactor. Phosphorylated at Ser-203 by MAPK1/ERK2 under hypoxic conditions, which promotes its mitochondrial targeting.

Its subcellular location is the cytoplasm. The protein resides in the cytosol. It is found in the mitochondrion matrix. It catalyses the reaction (2R)-3-phosphoglycerate + ATP = (2R)-3-phospho-glyceroyl phosphate + ADP. The enzyme catalyses L-seryl-[protein] + ATP = O-phospho-L-seryl-[protein] + ADP + H(+). It participates in carbohydrate degradation; glycolysis; pyruvate from D-glyceraldehyde 3-phosphate: step 2/5. Functionally, catalyzes one of the two ATP producing reactions in the glycolytic pathway via the reversible conversion of 1,3-diphosphoglycerate to 3-phosphoglycerate. Both L- and D- forms of purine and pyrimidine nucleotides can be used as substrates, but the activity is much lower on pyrimidines. In addition to its role as a glycolytic enzyme, it seems that PGK-1 acts as a polymerase alpha cofactor protein (primer recognition protein). Acts as a protein kinase when localized to the mitochondrion where it phosphorylates pyruvate dehydrogenase kinase PDK1 to inhibit pyruvate dehydrogenase complex activity and suppress the formation of acetyl-coenzyme A from pyruvate, and consequently inhibit oxidative phosphorylation and promote glycolysis. May play a role in sperm motility. This chain is Phosphoglycerate kinase 1 (Pgk1), found in Rattus norvegicus (Rat).